A 193-amino-acid polypeptide reads, in one-letter code: p53 apoptosis effector related to PMP-22 (193 aa).

Helical transmembrane passes span 12–32, 81–101, 110–130, and 151–171; these read RWIL…ALAG, LFCG…ALCG, VIGG…VIYP, and WAYG…FFFC.

Belongs to the TMEM47 family. Expressed in the stratified squamous skin epithelium of the skin and the tongue, but not in simple epithelia (at protein level). Expressed in the oral epithelium, tongue epithelium and skin (at protein level). More abundant in areas of lower flow stress in the inner curvature compared to the outer curvature regions of the aorta (at protein level). Expressed in luminal cells and myoepithelium cells of the mammary epithelium (at protein level). Expression increases during the early stages of pregnancy before decreasing before birth, expression continues to be weak during involution which mirrors decreased desmosome abundance and organization at these time points (at protein level). Expressed by epithelial cells at the mucosal surface in the proximal colon (at protein level). Expressed in apoptotic cells.

The protein resides in the cell junction. The protein localises to the desmosome. It localises to the cell membrane. It is found in the cytoplasm. In terms of biological role, component of intercellular desmosome junctions. Plays a role in stratified epithelial integrity and cell-cell adhesion by promoting desmosome assembly. Thereby plays a role in barrier function of the skin against infection. Plays a role in mammary epithelial tissue homeostasis and remodeling during and after pregnancy, potentially via its involvement in desmosome cell-cell junctions. Required for tooth enamel development via facilitating desmosome-mediated ameloblast adhesion to the stratum intermedium during the transitional stage of amelogenesis. May also play a role in downstream transcriptional regulation of other genes involved in amelogenesis such as AMBN, ENAM, MMP20 and KLK4. Plays a role as an effector in the TP53-dependent apoptotic pathway. Positively regulates apoptosis in T-helper 17 (Th17) cell populations via caspase-dependent signaling. Promotes neutrophil transepithelial migration in response to chemoattractants such as hepoxilin A3 (HXA3), N-Formylmethionyl-leucyl-phenylalanine (fMLP) and CXCL8/IL-8. May act as a positive regulator of endothelial cell apoptosis in response to blood flow-derived shear stress. This chain is p53 apoptosis effector related to PMP-22, found in Mus musculus (Mouse).